The primary structure comprises 506 residues: MKIYSRTVAVSLIVSFLLCFSAFAERNDGTFRVGLKKLKLDSKNRLAARVESKQEKPLRAYRLGDSGDADVVVLKNYLDAQYYGEIAIGTPPQKFTVVFDTGSSNLWVPSSKCYFSLACLLHPKYKSSRSSTYEKNGKAAAIHYGTGAIAGFFSNDAVTVGDLVVKDQEFIEATKEPGITFVVAKFDGILGLGFQEISVGKAAPVWYNMLKQGLIKEPVFSFWLNRNADEEEGGELVFGGVDPNHFKGKHTYVPVTQKGYWQFDMGDVLIGGAPTGFCESGCSAIADSGTSLLAGPTTIITMINHAIGAAGVVSQQCKTVVDQYGQTILDLLLSETQPKKICSQIGLCTFDGTRGVSMGIESVVDKENAKLSNGVGDAACSACEMAVVWIQSQLRQNMTQERILNYVNELCERLPSPMGESAVDCAQLSTMPTVSLTIGGKVFDLAPEEYVLKVGEGPVAQCISGFIALDVAPPRGPLWILGDVFMGKYHTVFDFGNEQVGFAEAA.

The signal sequence occupies residues 1–24 (MKIYSRTVAVSLIVSFLLCFSAFA). Residues 25-64 (ERNDGTFRVGLKKLKLDSKNRLAARVESKQEKPLRAYRLG) constitute a propeptide, activation peptide. Positions 82–503 (YYGEIAIGTP…DFGNEQVGFA (422 aa)) constitute a Peptidase A1 domain. Residue Asp-100 is part of the active site. 2 disulfides stabilise this stretch: Cys-113-Cys-119 and Cys-278-Cys-282. Asp-287 is a catalytic residue. In terms of domain architecture, Saposin B-type spans 312–417 (VVSQQCKTVV…NELCERLPSP (106 aa)). Cystine bridges form between Cys-317–Cys-411, Cys-342–Cys-383, Cys-348–Cys-380, and Cys-425–Cys-462. Asn-397 carries an N-linked (GlcNAc...) asparagine glycan.

This sequence belongs to the peptidase A1 family. In terms of tissue distribution, expressed in roots, leaves, stems, petals, carpels, seed pods and dry seeds.

It is found in the vacuole. Its function is as follows. Involved in the breakdown of propeptides of storage proteins in protein-storage vacuoles. Possesses aspartic protease activity in vitro. The chain is Aspartic proteinase A1 (APA1) from Arabidopsis thaliana (Mouse-ear cress).